The chain runs to 273 residues: Pantothenate synthetase (273 aa).

Residue 27–34 participates in ATP binding; the sequence is MGALHEGH. Histidine 34 (proton donor) is an active-site residue. Glutamine 58 contacts (R)-pantoate. Beta-alanine is bound at residue glutamine 58. 144–147 is an ATP binding site; sequence GKKD. Residue glutamine 150 coordinates (R)-pantoate. ATP-binding positions include valine 173 and 181-184; that span reads LSSR.

The protein belongs to the pantothenate synthetase family. In terms of assembly, homodimer.

The protein resides in the cytoplasm. It carries out the reaction (R)-pantoate + beta-alanine + ATP = (R)-pantothenate + AMP + diphosphate + H(+). It participates in cofactor biosynthesis; (R)-pantothenate biosynthesis; (R)-pantothenate from (R)-pantoate and beta-alanine: step 1/1. Its function is as follows. Catalyzes the condensation of pantoate with beta-alanine in an ATP-dependent reaction via a pantoyl-adenylate intermediate. This is Pantothenate synthetase from Sulfurimonas denitrificans (strain ATCC 33889 / DSM 1251) (Thiomicrospira denitrificans (strain ATCC 33889 / DSM 1251)).